The primary structure comprises 67 residues: Small ribosomal subunit protein eS31 (67 aa).

4 residues coordinate Zn(2+): Cys-31, Cys-34, Cys-49, and Cys-52. Residues 31–52 (CPKCGAGVFMAEHLNRFACGKC) form a C4-type zinc finger.

The protein belongs to the eukaryotic ribosomal protein eS31 family. Part of the 30S ribosomal subunit. Zn(2+) serves as cofactor.

This Methanococcus maripaludis (strain C6 / ATCC BAA-1332) protein is Small ribosomal subunit protein eS31.